The following is a 594-amino-acid chain: UvrABC system protein C (594 aa).

In terms of domain architecture, GIY-YIG spans 13 to 99 (HSSGVYQYFD…IKQLKPKYNI (87 aa)). The 36-residue stretch at 205–240 (DKLIKELELKMERLSNNLRFEEALIYRDRIAKIQKI) folds into the UVR domain.

The protein belongs to the UvrC family. Interacts with UvrB in an incision complex.

The protein resides in the cytoplasm. The UvrABC repair system catalyzes the recognition and processing of DNA lesions. UvrC both incises the 5' and 3' sides of the lesion. The N-terminal half is responsible for the 3' incision and the C-terminal half is responsible for the 5' incision. In Helicobacter pylori (strain HPAG1), this protein is UvrABC system protein C.